Here is a 461-residue protein sequence, read N- to C-terminus: Cysteine--tRNA ligase (461 aa).

C28 lines the Zn(2+) pocket. Positions V30–H40 match the 'HIGH' region motif. Residues C209, H234, and E238 each coordinate Zn(2+). The 'KMSKS' region signature appears at K266–S270. K269 serves as a coordination point for ATP.

Belongs to the class-I aminoacyl-tRNA synthetase family. Monomer. The cofactor is Zn(2+).

Its subcellular location is the cytoplasm. It catalyses the reaction tRNA(Cys) + L-cysteine + ATP = L-cysteinyl-tRNA(Cys) + AMP + diphosphate. This Serratia proteamaculans (strain 568) protein is Cysteine--tRNA ligase.